The chain runs to 341 residues: Glycerol-3-phosphate dehydrogenase [NAD(P)+] (341 aa).

Positions 14, 15, 35, and 108 each coordinate NADPH. Sn-glycerol 3-phosphate is bound by residues K108 and G136. Residue A140 participates in NADPH binding. Sn-glycerol 3-phosphate-binding residues include K191, D244, S254, R255, and N256. The Proton acceptor role is filled by K191. R255 serves as a coordination point for NADPH. NADPH is bound by residues V279 and E281.

This sequence belongs to the NAD-dependent glycerol-3-phosphate dehydrogenase family.

The protein localises to the cytoplasm. The catalysed reaction is sn-glycerol 3-phosphate + NAD(+) = dihydroxyacetone phosphate + NADH + H(+). It carries out the reaction sn-glycerol 3-phosphate + NADP(+) = dihydroxyacetone phosphate + NADPH + H(+). Its pathway is membrane lipid metabolism; glycerophospholipid metabolism. In terms of biological role, catalyzes the reduction of the glycolytic intermediate dihydroxyacetone phosphate (DHAP) to sn-glycerol 3-phosphate (G3P), the key precursor for phospholipid synthesis. This Pseudomonas savastanoi pv. phaseolicola (strain 1448A / Race 6) (Pseudomonas syringae pv. phaseolicola (strain 1448A / Race 6)) protein is Glycerol-3-phosphate dehydrogenase [NAD(P)+].